The chain runs to 445 residues: D-serine dehydratase (445 aa).

Residue K118 is modified to N6-(pyridoxal phosphate)lysine.

The protein belongs to the serine/threonine dehydratase family. DsdA subfamily. In terms of assembly, monomer. The cofactor is pyridoxal 5'-phosphate.

The enzyme catalyses D-serine = pyruvate + NH4(+). In Serratia proteamaculans (strain 568), this protein is D-serine dehydratase.